Reading from the N-terminus, the 496-residue chain is Proline--tRNA ligase (496 aa).

It belongs to the class-II aminoacyl-tRNA synthetase family. ProS type 3 subfamily. In terms of assembly, homodimer.

It localises to the cytoplasm. It catalyses the reaction tRNA(Pro) + L-proline + ATP = L-prolyl-tRNA(Pro) + AMP + diphosphate. Catalyzes the attachment of proline to tRNA(Pro) in a two-step reaction: proline is first activated by ATP to form Pro-AMP and then transferred to the acceptor end of tRNA(Pro). The polypeptide is Proline--tRNA ligase (Phocaeicola vulgatus (strain ATCC 8482 / DSM 1447 / JCM 5826 / CCUG 4940 / NBRC 14291 / NCTC 11154) (Bacteroides vulgatus)).